The following is a 337-amino-acid chain: 5-formaminoimidazole-4-carboxamide-1-(beta)-D-ribofuranosyl 5'-monophosphate synthetase (337 aa).

2 residues coordinate 5-amino-1-(5-phospho-beta-D-ribosyl)imidazole-4-carboxamide: H14 and S74. The 248-residue stretch at 81–328 (VELVERMKVP…IAREIRLAIE (248 aa)) folds into the ATP-grasp domain. ATP-binding positions include 125–185 (PDDI…VPVY) and E207. 5-amino-1-(5-phospho-beta-D-ribosyl)imidazole-4-carboxamide is bound at residue N235. Positions 273 and 286 each coordinate Mg(2+).

The protein belongs to the phosphohexose mutase family. The cofactor is Mg(2+). Requires Mn(2+) as cofactor.

The enzyme catalyses 5-amino-1-(5-phospho-beta-D-ribosyl)imidazole-4-carboxamide + formate + ATP = 5-formamido-1-(5-phospho-D-ribosyl)imidazole-4-carboxamide + ADP + phosphate. It functions in the pathway purine metabolism; IMP biosynthesis via de novo pathway; 5-formamido-1-(5-phospho-D-ribosyl)imidazole-4-carboxamide from 5-amino-1-(5-phospho-D-ribosyl)imidazole-4-carboxamide (formate route): step 1/1. In terms of biological role, catalyzes the ATP- and formate-dependent formylation of 5-aminoimidazole-4-carboxamide-1-beta-d-ribofuranosyl 5'-monophosphate (AICAR) to 5-formaminoimidazole-4-carboxamide-1-beta-d-ribofuranosyl 5'-monophosphate (FAICAR) in the absence of folates. The protein is 5-formaminoimidazole-4-carboxamide-1-(beta)-D-ribofuranosyl 5'-monophosphate synthetase of Pyrococcus abyssi (strain GE5 / Orsay).